The following is a 248-amino-acid chain: 3-deoxy-manno-octulosonate cytidylyltransferase (248 aa).

Belongs to the KdsB family.

It localises to the cytoplasm. It carries out the reaction 3-deoxy-alpha-D-manno-oct-2-ulosonate + CTP = CMP-3-deoxy-beta-D-manno-octulosonate + diphosphate. It participates in nucleotide-sugar biosynthesis; CMP-3-deoxy-D-manno-octulosonate biosynthesis; CMP-3-deoxy-D-manno-octulosonate from 3-deoxy-D-manno-octulosonate and CTP: step 1/1. Its pathway is bacterial outer membrane biogenesis; lipopolysaccharide biosynthesis. Its function is as follows. Activates KDO (a required 8-carbon sugar) for incorporation into bacterial lipopolysaccharide in Gram-negative bacteria. The chain is 3-deoxy-manno-octulosonate cytidylyltransferase from Christiangramia forsetii (strain DSM 17595 / CGMCC 1.15422 / KT0803) (Gramella forsetii).